We begin with the raw amino-acid sequence, 579 residues long: MPALRKHPQTATKHLFVTGGVVSSLGKGLTGSSLGQLLTARGLQVTMQKLDPYLNVDPGTMNPFQHGEVFVTEDGAETDLDVGHYERFLDRNLSGSANVTTGQIYSSVIAKERRGEYLGDTVQVIPHITDEIKSRIVAMAAPDEHGNRPDVVITEVGGTVGDIESLPFLEAARQVRHEVGRENCFFLHCSLVPYMAPSGELKTKPTQHSVAALRSIGIQPDALILRCDRDVPEALKNKIALMCDVDIDGVISTPDAPSIYDIPKVLHREELDAYVVRRLNLPFRDVDWTQWNDLLKRVHEPHETVRIALVGKYIDLSDAYLSVTEALRAGGFFHHAKVEMRWVASDDCELDSGAAAALADVDGVLIPGGFGIRGIEGKIGAISYARKRGLPVLGLCLGLQCIVIEAARSVGITGANSAEFDPATPDPVISTMADQRDAVAGEADLGGTMRLGAYPAVLEEDSIVARAYQATEVSERHRHRYEVNNAYRDRIAESGLRFSGTSPDGHLVEFVEYDAEQHPFLVGTQAHPELKSRPTRPHPLFAAFIGAALDYKAAERLPVEIPEQRSNGVELLQEPASRG.

The segment at 1–281 (MPALRKHPQT…DAYVVRRLNL (281 aa)) is amidoligase domain. Position 23 (S23) interacts with CTP. S23 contacts UTP. ATP contacts are provided by residues 24-29 (SLGKGL) and D81. Residues D81 and E155 each coordinate Mg(2+). Residues 162–164 (DIE), 202–207 (KTKPTQ), and K238 each bind CTP. Residues 202-207 (KTKPTQ) and K238 contribute to the UTP site. The 249-residue stretch at 306 to 554 (RIALVGKYID…IGAALDYKAA (249 aa)) folds into the Glutamine amidotransferase type-1 domain. G369 lines the L-glutamine pocket. C396 (nucleophile; for glutamine hydrolysis) is an active-site residue. L-glutamine contacts are provided by residues 397–400 (LGLQ), E419, and R480. Active-site residues include H527 and E529.

The protein belongs to the CTP synthase family. In terms of assembly, homotetramer.

It catalyses the reaction UTP + L-glutamine + ATP + H2O = CTP + L-glutamate + ADP + phosphate + 2 H(+). The enzyme catalyses L-glutamine + H2O = L-glutamate + NH4(+). It carries out the reaction UTP + NH4(+) + ATP = CTP + ADP + phosphate + 2 H(+). It participates in pyrimidine metabolism; CTP biosynthesis via de novo pathway; CTP from UDP: step 2/2. With respect to regulation, allosterically activated by GTP, when glutamine is the substrate; GTP has no effect on the reaction when ammonia is the substrate. The allosteric effector GTP functions by stabilizing the protein conformation that binds the tetrahedral intermediate(s) formed during glutamine hydrolysis. Inhibited by the product CTP, via allosteric rather than competitive inhibition. Catalyzes the ATP-dependent amination of UTP to CTP with either L-glutamine or ammonia as the source of nitrogen. Regulates intracellular CTP levels through interactions with the four ribonucleotide triphosphates. The sequence is that of CTP synthase from Mycobacterium sp. (strain JLS).